The following is a 347-amino-acid chain: tRNA N6-adenosine threonylcarbamoyltransferase (347 aa).

Positions 117 and 121 each coordinate Fe cation. Substrate-binding positions include 140–144 (LVSGG), aspartate 174, glycine 187, aspartate 191, and asparagine 281. A Fe cation-binding site is contributed by aspartate 309.

The protein belongs to the KAE1 / TsaD family. Requires Fe(2+) as cofactor.

The protein localises to the cytoplasm. It catalyses the reaction L-threonylcarbamoyladenylate + adenosine(37) in tRNA = N(6)-L-threonylcarbamoyladenosine(37) in tRNA + AMP + H(+). Required for the formation of a threonylcarbamoyl group on adenosine at position 37 (t(6)A37) in tRNAs that read codons beginning with adenine. Is involved in the transfer of the threonylcarbamoyl moiety of threonylcarbamoyl-AMP (TC-AMP) to the N6 group of A37, together with TsaE and TsaB. TsaD likely plays a direct catalytic role in this reaction. This chain is tRNA N6-adenosine threonylcarbamoyltransferase, found in Thermobifida fusca (strain YX).